Consider the following 690-residue polypeptide: DNA-directed RNA polymerase subunit beta' (690 aa).

Zn(2+) contacts are provided by cysteine 76, cysteine 78, cysteine 94, and cysteine 97. Residues aspartate 496, aspartate 498, and aspartate 500 each contribute to the Mg(2+) site.

It belongs to the RNA polymerase beta' chain family. RpoC1 subfamily. In terms of assembly, in plastids the minimal PEP RNA polymerase catalytic core is composed of four subunits: alpha, beta, beta', and beta''. When a (nuclear-encoded) sigma factor is associated with the core the holoenzyme is formed, which can initiate transcription. The cofactor is Mg(2+). Requires Zn(2+) as cofactor.

Its subcellular location is the plastid. It is found in the chloroplast. The catalysed reaction is RNA(n) + a ribonucleoside 5'-triphosphate = RNA(n+1) + diphosphate. Functionally, DNA-dependent RNA polymerase catalyzes the transcription of DNA into RNA using the four ribonucleoside triphosphates as substrates. This Lemna minor (Common duckweed) protein is DNA-directed RNA polymerase subunit beta'.